A 149-amino-acid chain; its full sequence is MQVILLDKVANLGSLGDQVNVKAGYARNFLVPQGKAVPATKKNVEFFEARRAELEAKLADVLSAAEARAAQINALESVTIASKAGDEGKLFGSIGTRDIADAVTAAGVKVAKSEVRLPNGVLRNVGEHEVDFQVHSEVFAKVIINVVAE.

Belongs to the bacterial ribosomal protein bL9 family.

Its function is as follows. Binds to the 23S rRNA. This Klebsiella pneumoniae (strain 342) protein is Large ribosomal subunit protein bL9.